Consider the following 388-residue polypeptide: S-adenosylmethionine synthase (388 aa).

Histidine 17 is an ATP binding site. Aspartate 19 is a Mg(2+) binding site. Glutamate 45 is a K(+) binding site. Residues glutamate 58 and glutamine 102 each coordinate L-methionine. Positions 102-112 are flexible loop; it reads QSVHIAQGVDA. Residues 167–169, aspartate 241, 247–248, alanine 264, and lysine 268 each bind ATP; these read DAK and RK. Aspartate 241 contributes to the L-methionine binding site. Lysine 272 serves as a coordination point for L-methionine.

This sequence belongs to the AdoMet synthase family. Homotetramer; dimer of dimers. The cofactor is Mg(2+). K(+) is required as a cofactor.

The protein resides in the cytoplasm. The enzyme catalyses L-methionine + ATP + H2O = S-adenosyl-L-methionine + phosphate + diphosphate. It participates in amino-acid biosynthesis; S-adenosyl-L-methionine biosynthesis; S-adenosyl-L-methionine from L-methionine: step 1/1. Its function is as follows. Catalyzes the formation of S-adenosylmethionine (AdoMet) from methionine and ATP. The overall synthetic reaction is composed of two sequential steps, AdoMet formation and the subsequent tripolyphosphate hydrolysis which occurs prior to release of AdoMet from the enzyme. The protein is S-adenosylmethionine synthase of Maricaulis maris (strain MCS10) (Caulobacter maris).